An 843-amino-acid polypeptide reads, in one-letter code: Protein P (843 aa).

Positions 1–177 are terminal protein domain (TP); that stretch reads MPLSYQHFRK…FCGSPYSWEQ (177 aa). The segment at 178 to 346 is spacer; sequence DLQHGRLVFQ…YCLCHIVNLI (169 aa). 2 disordered regions span residues 220-269 and 291-316; these read KSRL…HNCA and TSKG…RSRS. Residues 347 to 690 form a polymerase/reverse transcriptase domain (RT) region; it reads EDWGPCTEHG…YLNLYPVARQ (344 aa). One can recognise a Reverse transcriptase domain in the interval 357-600; sequence EHRIRTPRTP…YSLNFMGYVI (244 aa). Residues Asp429, Asp551, and Asp552 each coordinate Mg(2+).

The protein belongs to the hepadnaviridae P protein family.

It catalyses the reaction DNA(n) + a 2'-deoxyribonucleoside 5'-triphosphate = DNA(n+1) + diphosphate. The enzyme catalyses Endonucleolytic cleavage to 5'-phosphomonoester.. Activated by host HSP70 and HSP40 in vitro to be able to bind the epsilon loop of the pgRNA. Because deletion of the RNase H region renders the protein partly chaperone-independent, the chaperones may be needed indirectly to relieve occlusion of the RNA-binding site by this domain. Inhibited by several reverse-transcriptase inhibitors: Lamivudine, Adefovir and Entecavir. In terms of biological role, multifunctional enzyme that converts the viral RNA genome into dsDNA in viral cytoplasmic capsids. This enzyme displays a DNA polymerase activity that can copy either DNA or RNA templates, and a ribonuclease H (RNase H) activity that cleaves the RNA strand of RNA-DNA heteroduplexes in a partially processive 3'- to 5'-endonucleasic mode. Neo-synthesized pregenomic RNA (pgRNA) are encapsidated together with the P protein, and reverse-transcribed inside the nucleocapsid. Initiation of reverse-transcription occurs first by binding the epsilon loop on the pgRNA genome, and is initiated by protein priming, thereby the 5'-end of (-)DNA is covalently linked to P protein. Partial (+)DNA is synthesized from the (-)DNA template and generates the relaxed circular DNA (RC-DNA) genome. After budding and infection, the RC-DNA migrates in the nucleus, and is converted into a plasmid-like covalently closed circular DNA (cccDNA). The activity of P protein does not seem to be necessary for cccDNA generation, and is presumably released from (+)DNA by host nuclear DNA repair machinery. The sequence is that of Protein P from Homo sapiens (Human).